The chain runs to 461 residues: Ribosomal protein uS12 methylthiotransferase RimO (461 aa).

The MTTase N-terminal domain occupies 13-128; the sequence is PKVGFVSLGC…VMQHVHMHLP (116 aa). [4Fe-4S] cluster-binding residues include C22, C58, C87, C159, C163, and C166. The Radical SAM core domain maps to 145-390; that stretch reads LTPRHYAYLK…MEVAEEVSAK (246 aa). Positions 393-461 constitute a TRAM domain; the sequence is AKKVGKTLKV…ADGHDLWGEV (69 aa).

This sequence belongs to the methylthiotransferase family. RimO subfamily. It depends on [4Fe-4S] cluster as a cofactor.

The protein localises to the cytoplasm. The catalysed reaction is L-aspartate(89)-[ribosomal protein uS12]-hydrogen + (sulfur carrier)-SH + AH2 + 2 S-adenosyl-L-methionine = 3-methylsulfanyl-L-aspartate(89)-[ribosomal protein uS12]-hydrogen + (sulfur carrier)-H + 5'-deoxyadenosine + L-methionine + A + S-adenosyl-L-homocysteine + 2 H(+). In terms of biological role, catalyzes the methylthiolation of an aspartic acid residue of ribosomal protein uS12. The polypeptide is Ribosomal protein uS12 methylthiotransferase RimO (Paraburkholderia xenovorans (strain LB400)).